The primary structure comprises 124 residues: MAKLTNEDILNAIADMSVIDVVELVSAMEEKFGVSATAVTPVAVVADVDNTVVEKDEFDIMLTSFGEKKVAVIKAVRSITGLGLKESKDMVESAPVVIKESASKIEAEDIERQLKEVGASVELK.

The protein belongs to the bacterial ribosomal protein bL12 family. In terms of assembly, homodimer. Part of the ribosomal stalk of the 50S ribosomal subunit. Forms a multimeric L10(L12)X complex, where L10 forms an elongated spine to which 2 to 4 L12 dimers bind in a sequential fashion. Binds GTP-bound translation factors.

Its function is as follows. Forms part of the ribosomal stalk which helps the ribosome interact with GTP-bound translation factors. Is thus essential for accurate translation. The protein is Large ribosomal subunit protein bL12 of Vesicomyosocius okutanii subsp. Calyptogena okutanii (strain HA).